A 46-amino-acid polypeptide reads, in one-letter code: Photosystem II reaction center protein K (46 aa).

A propeptide spanning residues 1 to 9 is cleaved from the precursor; the sequence is MTTLALVLA. Residues 18 to 38 traverse the membrane as a helical segment; it reads FAPIVDVLPVIPVFFILLAFV.

The protein belongs to the PsbK family. As to quaternary structure, PSII is composed of 1 copy each of membrane proteins PsbA, PsbB, PsbC, PsbD, PsbE, PsbF, PsbH, PsbI, PsbJ, PsbK, PsbL, PsbM, PsbT, PsbX, PsbY, PsbZ, Psb30/Ycf12, at least 3 peripheral proteins of the oxygen-evolving complex and a large number of cofactors. It forms dimeric complexes. This protein is tightly associated with CP43 (psbC), one of the core proteins.

The protein localises to the plastid. It is found in the chloroplast thylakoid membrane. Functionally, one of the components of the core complex of photosystem II (PSII). PSII is a light-driven water:plastoquinone oxidoreductase that uses light energy to abstract electrons from H(2)O, generating O(2) and a proton gradient subsequently used for ATP formation. It consists of a core antenna complex that captures photons, and an electron transfer chain that converts photonic excitation into a charge separation. Required for assembly and/or stability of PSII. The polypeptide is Photosystem II reaction center protein K (Chlamydomonas reinhardtii (Chlamydomonas smithii)).